The sequence spans 388 residues: Ovalbumin-related protein Y (388 aa).

Residues C74 and C121 are joined by a disulfide bond. N95, N215, N293, and N312 each carry an N-linked (GlcNAc...) asparagine glycan.

Belongs to the serpin family. Ov-serpin subfamily. Post-translationally, N-glycosylated on at least two Asn residues by ovomucoid type carbohydrate units. The N-terminus is blocked. In terms of tissue distribution, major protein of egg white. Expressed in the magnum of the oviduct (at protein level).

It is found in the secreted. The chain is Ovalbumin-related protein Y (SERPINB14B) from Gallus gallus (Chicken).